The chain runs to 219 residues: Ribosomal RNA small subunit methyltransferase G (219 aa).

S-adenosyl-L-methionine contacts are provided by Gly-81, Leu-86, and Arg-150.

It belongs to the methyltransferase superfamily. RNA methyltransferase RsmG family.

It localises to the cytoplasm. The catalysed reaction is guanosine(527) in 16S rRNA + S-adenosyl-L-methionine = N(7)-methylguanosine(527) in 16S rRNA + S-adenosyl-L-homocysteine. Functionally, specifically methylates the N7 position of guanine in position 527 of 16S rRNA. The chain is Ribosomal RNA small subunit methyltransferase G from Magnetococcus marinus (strain ATCC BAA-1437 / JCM 17883 / MC-1).